The primary structure comprises 88 residues: CRISPR-associated endoribonuclease Cas2 3 (88 aa).

D9 lines the Mg(2+) pocket.

This sequence belongs to the CRISPR-associated endoribonuclease Cas2 protein family. As to quaternary structure, homodimer, forms a heterotetramer with a Cas1 homodimer. The cofactor is Mg(2+).

Functionally, CRISPR (clustered regularly interspaced short palindromic repeat), is an adaptive immune system that provides protection against mobile genetic elements (viruses, transposable elements and conjugative plasmids). CRISPR clusters contain sequences complementary to antecedent mobile elements and target invading nucleic acids. CRISPR clusters are transcribed and processed into CRISPR RNA (crRNA). Functions as a ssRNA-specific endoribonuclease. Involved in the integration of spacer DNA into the CRISPR cassette. In Thermodesulfovibrio yellowstonii (strain ATCC 51303 / DSM 11347 / YP87), this protein is CRISPR-associated endoribonuclease Cas2 3.